Consider the following 180-residue polypeptide: Flavodoxin B (180 aa).

In terms of domain architecture, Flavodoxin-like spans 4–173; sequence IGLFFGSNTG…RVAAWLAQIA (170 aa).

This sequence belongs to the flavodoxin family. The cofactor is FMN.

In terms of biological role, low-potential electron donor to a number of redox enzymes. NifF is the electron donor to nitrogenase. This chain is Flavodoxin B (nifF), found in Azotobacter chroococcum mcd 1.